We begin with the raw amino-acid sequence, 474 residues long: Cysteine--tRNA ligase (474 aa).

Cysteine 27 contributes to the Zn(2+) binding site. The short motif at isoleucine 29–histidine 39 is the 'HIGH' region element. Zn(2+) contacts are provided by cysteine 213, histidine 238, and glutamate 242. The 'KMSKS' region signature appears at lysine 271–serine 275. Residue lysine 274 participates in ATP binding.

Belongs to the class-I aminoacyl-tRNA synthetase family. The cofactor is Zn(2+).

Its subcellular location is the cytoplasm. The catalysed reaction is tRNA(Cys) + L-cysteine + ATP = L-cysteinyl-tRNA(Cys) + AMP + diphosphate. The chain is Cysteine--tRNA ligase from Pyrobaculum neutrophilum (strain DSM 2338 / JCM 9278 / NBRC 100436 / V24Sta) (Thermoproteus neutrophilus).